Consider the following 243-residue polypeptide: Triosephosphate isomerase (243 aa).

9 to 11 (NWK) provides a ligand contact to substrate. Catalysis depends on His-96, which acts as the Electrophile. Residue Glu-165 is the Proton acceptor of the active site. Residues Gly-171, Ser-204, and 225-226 (GG) contribute to the substrate site.

The protein belongs to the triosephosphate isomerase family. Homodimer.

It localises to the cytoplasm. It carries out the reaction D-glyceraldehyde 3-phosphate = dihydroxyacetone phosphate. Its pathway is carbohydrate biosynthesis; gluconeogenesis. It participates in carbohydrate degradation; glycolysis; D-glyceraldehyde 3-phosphate from glycerone phosphate: step 1/1. In terms of biological role, involved in the gluconeogenesis. Catalyzes stereospecifically the conversion of dihydroxyacetone phosphate (DHAP) to D-glyceraldehyde-3-phosphate (G3P). This chain is Triosephosphate isomerase, found in Parasynechococcus marenigrum (strain WH8102).